The primary structure comprises 454 residues: Maintenance of mitochondrial morphology protein 1 (454 aa).

Residues 1–117 (MESNYTGMDG…SFSSWSFAQG (117 aa)) lie on the Lumenal side of the membrane. Residues 118-138 (LIVGQVSVVLVLIFFIKFFIF) form a helical membrane-spanning segment. At 139 to 454 (SDSSTKTNPN…ESEPGRETHY (316 aa)) the chain is on the cytoplasmic side. The disordered stretch occupies residues 144-164 (KTNPNPAKNSSSTNSLSGLSS). The span at 153–164 (SSSTNSLSGLSS) shows a compositional bias: low complexity. The SMP-LTD domain occupies 215–427 (PAESLDWFNV…EPRFQFIKLP (213 aa)). 6 residues coordinate a 1,2-diacyl-sn-glycero-3-phosphate: arginine 253, tryptophan 411, arginine 415, tryptophan 430, arginine 432, and serine 433. The disordered stretch occupies residues 434-454 (KNTREGKADVDESEPGRETHY). Basic and acidic residues predominate over residues 435-454 (NTREGKADVDESEPGRETHY).

This sequence belongs to the MMM1 family. In terms of assembly, homodimer. Component of the ER-mitochondria encounter structure (ERMES) or MDM complex, composed of MMM1, MDM10, MDM12 and MDM34. An MMM1 homodimer associates with one molecule of MDM12 on each side in a pairwise head-to-tail manner, and the SMP-LTD domains of MMM1 and MDM12 generate a continuous hydrophobic tunnel for phospholipid trafficking.

It is found in the endoplasmic reticulum membrane. Functionally, component of the ERMES/MDM complex, which serves as a molecular tether to connect the endoplasmic reticulum (ER) and mitochondria. Components of this complex are involved in the control of mitochondrial shape and protein biogenesis, and function in nonvesicular lipid trafficking between the ER and mitochondria. Preferentially binds to glycerophospholipids such as phosphatidylcholoine (PC), phosphatidic acid (PA), phosphatidylglycerol (PG), and phosphatidylserine (PS), but not to phosphatidylethanolamine (PE). The MDM12-MMM1 subcomplex functions in the major beta-barrel assembly pathway that is responsible for biogenesis of all outer membrane beta-barrel proteins, and acts in a late step after the SAM complex. The MDM10-MDM12-MMM1 subcomplex further acts in the TOM40-specific pathway after the action of the MDM12-MMM1 complex. Essential for establishing and maintaining the structure of mitochondria and maintenance of mtDNA nucleoids. This is Maintenance of mitochondrial morphology protein 1 from Zygosaccharomyces rouxii (strain ATCC 2623 / CBS 732 / NBRC 1130 / NCYC 568 / NRRL Y-229).